A 137-amino-acid polypeptide reads, in one-letter code: Phosphomevalonate dehydratase small subunit (137 aa).

Residue serine 65 is the Proton acceptor of the active site.

Belongs to the AcnX type II small subunit family. Heterodimer composed of a large subunit (PMDh-L) and a small subunit (PMDh-S).

It catalyses the reaction (R)-5-phosphomevalonate = (2E)-3-methyl-5-phosphooxypent-2-enoate + H2O. The protein operates within isoprenoid biosynthesis; isopentenyl diphosphate biosynthesis via mevalonate pathway. Component of a hydro-lyase that catalyzes the dehydration of mevalonate 5-phosphate (MVA5P) to form trans-anhydromevalonate 5-phosphate (tAHMP). Involved in the archaeal mevalonate (MVA) pathway, which provides fundamental precursors for isoprenoid biosynthesis, such as isopentenyl diphosphate (IPP) and dimethylallyl diphosphate (DMAPP). This Methanococcoides burtonii (strain DSM 6242 / NBRC 107633 / OCM 468 / ACE-M) protein is Phosphomevalonate dehydratase small subunit.